The following is a 277-amino-acid chain: 4-diphosphocytidyl-2-C-methyl-D-erythritol kinase (277 aa).

K9 is an active-site residue. 91–101 (PMGAGLGGGSS) contributes to the ATP binding site. The active site involves D133.

The protein belongs to the GHMP kinase family. IspE subfamily.

It carries out the reaction 4-CDP-2-C-methyl-D-erythritol + ATP = 4-CDP-2-C-methyl-D-erythritol 2-phosphate + ADP + H(+). It functions in the pathway isoprenoid biosynthesis; isopentenyl diphosphate biosynthesis via DXP pathway; isopentenyl diphosphate from 1-deoxy-D-xylulose 5-phosphate: step 3/6. Catalyzes the phosphorylation of the position 2 hydroxy group of 4-diphosphocytidyl-2C-methyl-D-erythritol. The sequence is that of 4-diphosphocytidyl-2-C-methyl-D-erythritol kinase from Acinetobacter baumannii (strain AB307-0294).